We begin with the raw amino-acid sequence, 255 residues long: 5'-nucleotidase SurE (255 aa).

Positions 8, 9, 40, and 93 each coordinate a divalent metal cation.

The protein belongs to the SurE nucleotidase family. A divalent metal cation serves as cofactor.

The protein localises to the cytoplasm. It catalyses the reaction a ribonucleoside 5'-phosphate + H2O = a ribonucleoside + phosphate. Functionally, nucleotidase that shows phosphatase activity on nucleoside 5'-monophosphates. This Rhodopseudomonas palustris (strain BisA53) protein is 5'-nucleotidase SurE.